A 778-amino-acid chain; its full sequence is MAQKMDCGAGLLGFQAEASVEDSALLMQTLMEAIQISEAPPTNQATAAASPQSSQPPTANEMADIQVSAAAARPKSAFKVQNATTKGPNGVYDFSQAHNAKDVPNTQPKAAFKSQNATPKGPNAAYDFSQAATTGELAANKSEMAFKAQNATTKVGPNATYNFSQSLNANDLANSRPKTPFKAWNDTTKAPTADTQTQNVNQAKMATSQADIETDPGISEPDGATAQTSADGSQAQNLESRTIIRGKRTRKINNLNVEENSSGDQRRAPLAAGTWRSAPVPVTTQNPPGAPPNVLWQTPLAWQNPSGWQNQTARQTPPARQSPPARQTPPAWQNPVAWQNPVIWPNPVIWQNPVIWPNPIVWPGPVVWPNPLAWQNPPGWQTPPGWQTPPGWQGPPDWQGPPDWPLPPDWPLPPDWPLPTDWPLPPDWIPADWPIPPDWQNLRPSPNLRPSPNSRASQNPGAAQPRDVALLQERANKLVKYLMLKDYTKVPIKRSEMLRDIIREYTDVYPEIIERACFVLEKKFGIQLKEIDKEEHLYILISTPESLAGILGTTKDTPKLGLLLVILGVIFMNGNRASEAVLWEALRKMGLRPGVRHPLLGDLRKLLTYEFVKQKYLDYRRVPNSNPPEYEFLWGLRSYHETSKMKVLRFIAEVQKRDPRDWTAQFMEAADEALDALDAAAAEAEARAEARTRMGIGDEAVSGPWSWDDIEFELLTWDEEGDFGDPWSRIPFTFWARYHQNARSRFPQTFAGPIIGPGGTASANFAANFGAIGFFWVE.

Disordered stretches follow at residues 41–60 (PTNQ…PTAN), 78–123 (FKVQ…KGPN), and 182–333 (KAWN…PAWQ). Tyrosine 92 bears the Phosphotyrosine mark. Polar residues-rich tracts occupy residues 104–118 (PNTQ…QNAT), 185–211 (NDTT…SQAD), 225–240 (TAQT…NLES), 253–263 (NNLNVEENSSG), and 300–319 (LAWQ…TPPA). A run of 19 repeats spans residues 296–301 (WQTPLA), 302–307 (WQNPSG), 308–313 (WQNQTA), 332–337 (WQNPVA), 338–343 (WQNPVI), 344–349 (WPNPVI), 350–355 (WQNPVI), 356–361 (WPNPIV), 362–367 (WPGPVV), 368–373 (WPNPLA), 374–379 (WQNPPG), 380–385 (WQTPPG), 386–391 (WQTPPG), 392–397 (WQGPPD), 398–403 (WQGPPD), 404–409 (WPLPPD), 410–415 (WPLPPD), 416–421 (WPLPTD), and 422–427 (WPLPPD). Positions 296-444 (WQTPLAWQNP…IPPDWQNLRP (149 aa)) are 22 X 6 AA tandem repeats of W-[PQ]-X-P-X-X. The interval 376-412 (NPPGWQTPPGWQTPPGWQGPPDWQGPPDWPLPPDWPL) is disordered. Residues 377 to 397 (PPGWQTPPGWQTPPGWQGPPD) show a composition bias toward low complexity. Pro residues predominate over residues 398 to 412 (WQGPPDWPLPPDWPL). The stretch at 428-432 (WIPAD) is one 20; approximate repeat. 2 consecutive repeat copies span residues 433–438 (WPIPPD) and 439–444 (WQNLRP). A compositionally biased stretch (low complexity) spans 440–455 (QNLRPSPNLRPSPNSR). A disordered region spans residues 440–466 (QNLRPSPNLRPSPNSRASQNPGAAQPR). Positions 471–669 (LQERANKLVK…RDWTAQFMEA (199 aa)) constitute an MAGE domain.

As to quaternary structure, interacts with DLX5, DLX7 and MSX2 and forms homomultimers. Interacts with UNC5A. Interacts with TRIM28 and PJA1. Interacts with NGFR/p75NTR and RORA. In terms of tissue distribution, expressed in bone marrow stromal cells from both multiple myeloma patients and healthy donors. Seems to be ubiquitously expressed.

Its subcellular location is the cytoplasm. It localises to the cell membrane. The protein localises to the nucleus. In terms of biological role, involved in the apoptotic response after nerve growth factor (NGF) binding in neuronal cells. Inhibits cell cycle progression, and facilitates NGFR-mediated apoptosis. May act as a regulator of the function of DLX family members. May enhance ubiquitin ligase activity of RING-type zinc finger-containing E3 ubiquitin-protein ligases. Proposed to act through recruitment and/or stabilization of the Ubl-conjugating enzyme (E2) at the E3:substrate complex. Plays a role in the circadian rhythm regulation. May act as RORA co-regulator, modulating the expression of core clock genes such as BMAL1 and NFIL3, induced, or NR1D1, repressed. This is Melanoma-associated antigen D1 (MAGED1) from Homo sapiens (Human).